A 68-amino-acid chain; its full sequence is Conotoxin Cal12.1p1 (68 aa).

Residues 1-23 constitute a propeptide that is removed on maturation; sequence DLITNSYTRGKPRHVTSWRNLRT.

Post-translationally, contains 4 disulfide bonds. Expressed by the venom duct.

The protein resides in the secreted. The sequence is that of Conotoxin Cal12.1p1 from Californiconus californicus (California cone).